Consider the following 221-residue polypeptide: 7-cyano-7-deazaguanine synthase (221 aa).

10 to 20 (FSGGQDSTTCL) provides a ligand contact to ATP. Residues Cys186, Cys195, Cys198, and Cys201 each coordinate Zn(2+).

Belongs to the QueC family. In terms of assembly, homodimer. It depends on Zn(2+) as a cofactor.

The enzyme catalyses 7-carboxy-7-deazaguanine + NH4(+) + ATP = 7-cyano-7-deazaguanine + ADP + phosphate + H2O + H(+). The protein operates within purine metabolism; 7-cyano-7-deazaguanine biosynthesis. In terms of biological role, catalyzes the ATP-dependent conversion of 7-carboxy-7-deazaguanine (CDG) to 7-cyano-7-deazaguanine (preQ(0)). This Geobacillus thermodenitrificans (strain NG80-2) protein is 7-cyano-7-deazaguanine synthase.